A 410-amino-acid polypeptide reads, in one-letter code: MSFKELDPEVWSAIQQEGARQNRTIELIASENFASKGVRAAQGSVLTNKYAEGYPYKRYYGGTEYVDVVEQLAIDRLKALFGAEYANVQPHSGSQANAAAYMAFLQPGDKILGMDLDAGGHLTHGAKVSFSGKMYQSYTYGLDAESEQLDYEAIAKQAREVQPQMIVAGASAYSRIIDFNKFREIADEVGAYLMVDMAHIAGLVAAGLHPNPVGIADVVTSTTHKTLRGPRGGVILSQEKYAKKINSAIFPGSQGGPLEHVIAGKAIAFGEALQPEFKAYAAQIIKNAQAMAEVFTATEDIRVVAGGTDNHLFNLDLTKTGLNGKQTQELLDSVSITTNKEALPNETLSPFITSGIRIGTPAITTRGFNEADARHVAELIVTAIHHYDDAKVLKDVKKEAEILAMTHLFE.

Residues Leu116 and 120–122 each bind (6S)-5,6,7,8-tetrahydrofolate; that span reads GHL. Lys225 is subject to N6-(pyridoxal phosphate)lysine. A (6S)-5,6,7,8-tetrahydrofolate-binding site is contributed by 349–351; sequence SPF.

The protein belongs to the SHMT family. Homodimer. Pyridoxal 5'-phosphate serves as cofactor.

It localises to the cytoplasm. The enzyme catalyses (6R)-5,10-methylene-5,6,7,8-tetrahydrofolate + glycine + H2O = (6S)-5,6,7,8-tetrahydrofolate + L-serine. The protein operates within one-carbon metabolism; tetrahydrofolate interconversion. Its pathway is amino-acid biosynthesis; glycine biosynthesis; glycine from L-serine: step 1/1. Its function is as follows. Catalyzes the reversible interconversion of serine and glycine with tetrahydrofolate (THF) serving as the one-carbon carrier. This reaction serves as the major source of one-carbon groups required for the biosynthesis of purines, thymidylate, methionine, and other important biomolecules. Also exhibits THF-independent aldolase activity toward beta-hydroxyamino acids, producing glycine and aldehydes, via a retro-aldol mechanism. In Leuconostoc citreum (strain KM20), this protein is Serine hydroxymethyltransferase.